The following is a 295-amino-acid chain: 33 kDa chaperonin (295 aa).

Intrachain disulfides connect Cys238-Cys240 and Cys271-Cys274.

The protein belongs to the HSP33 family. In terms of processing, under oxidizing conditions two disulfide bonds are formed involving the reactive cysteines. Under reducing conditions zinc is bound to the reactive cysteines and the protein is inactive.

Its subcellular location is the cytoplasm. In terms of biological role, redox regulated molecular chaperone. Protects both thermally unfolding and oxidatively damaged proteins from irreversible aggregation. Plays an important role in the bacterial defense system toward oxidative stress. This chain is 33 kDa chaperonin, found in Levilactobacillus brevis (strain ATCC 367 / BCRC 12310 / CIP 105137 / JCM 1170 / LMG 11437 / NCIMB 947 / NCTC 947) (Lactobacillus brevis).